A 118-amino-acid polypeptide reads, in one-letter code: V-type proton ATPase subunit G 3 (118 aa).

Residues 1-34 (MTSQSQGIHQLLQAEKRAKDKLEEAKKRKGKRLK) form a disordered region. Positions 5–54 (SQGIHQLLQAEKRAKDKLEEAKKRKGKRLKQAKEEAMVEIDQYRMQRDKE) form a coiled coil. Over residues 14–26 (AEKRAKDKLEEAK) the composition is skewed to basic and acidic residues.

This sequence belongs to the V-ATPase G subunit family. V-ATPase is a heteromultimeric enzyme made up of two complexes: the ATP-hydrolytic V1 complex and the proton translocation V0 complex. The V1 complex consists of three catalytic AB heterodimers that form a heterohexamer, three peripheral stalks each consisting of EG heterodimers, one central rotor including subunits D and F, and the regulatory subunits C and H. The proton translocation complex V0 consists of the proton transport subunit a, a ring of proteolipid subunits c9c'', rotary subunit d, subunits e and f, and the accessory subunits ATP6AP1/Ac45 and ATP6AP2/PRR. Kidney.

Its function is as follows. Subunit of the V1 complex of vacuolar(H+)-ATPase (V-ATPase), a multisubunit enzyme composed of a peripheral complex (V1) that hydrolyzes ATP and a membrane integral complex (V0) that translocates protons. V-ATPase is responsible for acidifying and maintaining the pH of intracellular compartments and in some cell types, is targeted to the plasma membrane, where it is responsible for acidifying the extracellular environment. The sequence is that of V-type proton ATPase subunit G 3 (ATP6V1G3) from Homo sapiens (Human).